A 965-amino-acid polypeptide reads, in one-letter code: FKBP12-associated protein 1 (965 aa).

The RING-type; degenerate zinc-finger motif lies at 68–118 (CMICTVEMDYTCQMFACKRCYRVFDYGCIREWALKSTEKTVDRIWKCPNCY). 5 NF-X1-type zinc fingers span residues 159-177 (CMHG…ECTR), 216-235 (CSIH…PCPE), 362-382 (CGKH…PCLQ), 468-487 (CGIH…PCLE), and 586-606 (CYHT…VCKQ). The R3H domain maps to 733–796 (ERWCSQIEAI…MRSVFIKKED (64 aa)). Thr951 carries the post-translational modification Phosphothreonine. Ser958 carries the phosphoserine modification.

It belongs to the NFX1 family. In terms of assembly, interacts with FPR1.

It localises to the cytoplasm. The protein localises to the nucleus. Its function is as follows. May play a role in transcription regulation. The protein is FKBP12-associated protein 1 (FAP1) of Saccharomyces cerevisiae (strain ATCC 204508 / S288c) (Baker's yeast).